The primary structure comprises 85 residues: MNYLIVISFALLLMTSVESGRDAYIADSENCTYFCGSNPYCNDLCTENGAKSGYCQWAGRYGNACWCIDLPDKVPIRIPGPCRGR.

The first 19 residues, Met-1–Ser-19, serve as a signal peptide directing secretion. Positions Arg-21–Arg-83 constitute an LCN-type CS-alpha/beta domain. 4 disulfide bridges follow: Cys-31–Cys-82, Cys-35–Cys-55, Cys-41–Cys-65, and Cys-45–Cys-67.

It belongs to the long (4 C-C) scorpion toxin superfamily. Sodium channel inhibitor family. Alpha subfamily. In terms of tissue distribution, expressed by the venom gland.

The protein localises to the secreted. This protein markedly relaxes the rat carbachol-precontracted anococcygeus muscle. This relaxation is inhibited by the inhibitor of nitric oxide (NO) synthase, N-nitro-L-arginine methyl ester (L-NAME), suggesting that the response induced by this protein is NO-mediated. This chain is Makatoxin-2, found in Olivierus martensii (Manchurian scorpion).